Here is a 642-residue protein sequence, read N- to C-terminus: Threonine--tRNA ligase (642 aa).

Positions 1–61 (MPVITLPDGS…DADATVAIIT (61 aa)) constitute a TGS domain. Residues 243–534 (DHRKIGKQLD…LTEEFAGFFP (292 aa)) are catalytic. Positions 334, 385, and 511 each coordinate Zn(2+).

Belongs to the class-II aminoacyl-tRNA synthetase family. Homodimer. Zn(2+) serves as cofactor.

It localises to the cytoplasm. It carries out the reaction tRNA(Thr) + L-threonine + ATP = L-threonyl-tRNA(Thr) + AMP + diphosphate + H(+). Functionally, catalyzes the attachment of threonine to tRNA(Thr) in a two-step reaction: L-threonine is first activated by ATP to form Thr-AMP and then transferred to the acceptor end of tRNA(Thr). Also edits incorrectly charged L-seryl-tRNA(Thr). This is Threonine--tRNA ligase from Edwardsiella ictaluri (strain 93-146).